The sequence spans 426 residues: Glutamate-1-semialdehyde 2,1-aminomutase (426 aa).

K265 bears the N6-(pyridoxal phosphate)lysine mark.

It belongs to the class-III pyridoxal-phosphate-dependent aminotransferase family. HemL subfamily. In terms of assembly, homodimer. The cofactor is pyridoxal 5'-phosphate.

The protein localises to the cytoplasm. It carries out the reaction (S)-4-amino-5-oxopentanoate = 5-aminolevulinate. The protein operates within porphyrin-containing compound metabolism; protoporphyrin-IX biosynthesis; 5-aminolevulinate from L-glutamyl-tRNA(Glu): step 2/2. This Escherichia coli O157:H7 protein is Glutamate-1-semialdehyde 2,1-aminomutase.